Consider the following 674-residue polypeptide: RNA polymerase sigma factor RpoD (674 aa).

The interval 214-252 is disordered; the sequence is AEGAAPAARRPASDEPEYDADGNPISRIDEEEDDDDSSN. Positions 440–510 are sigma-70 factor domain-2; sequence MVEANLRLVI…TRSIADQART (71 aa). The short motif at 464-467 is the Interaction with polymerase core subunit RpoC element; sequence DLIQ. The interval 519–595 is sigma-70 factor domain-3; it reads ETINKLVRTG…DKNAILPLDS (77 aa). Residues 608 to 661 form a sigma-70 factor domain-4 region; sequence VLASLTPREERVLRMRFGIGMNTDHTLEEVGQQFSVTRERIRQIEAKALRKLKH. The segment at residues 634–653 is a DNA-binding region (H-T-H motif); the sequence is LEEVGQQFSVTRERIRQIEA.

It belongs to the sigma-70 factor family. RpoD/SigA subfamily. As to quaternary structure, interacts transiently with the RNA polymerase catalytic core.

It is found in the cytoplasm. Sigma factors are initiation factors that promote the attachment of RNA polymerase to specific initiation sites and are then released. This sigma factor is the primary sigma factor during exponential growth. The protein is RNA polymerase sigma factor RpoD of Rhodobacter capsulatus (strain ATCC BAA-309 / NBRC 16581 / SB1003).